Reading from the N-terminus, the 930-residue chain is Probable SapB synthase (930 aa).

The 261-residue stretch at 256-516 folds into the Protein kinase domain; it reads YTVESALHFS…GSTRADETTR (261 aa). Residues 262–270 and K285 contribute to the ATP site; that span reads LHFSNGGGV. Catalysis depends on D395, which acts as the Proton acceptor. Residues 447–467 form a helical membrane-spanning segment; the sequence is YALACLRIVLFLPLTSLLAVD. Basic and acidic residues predominate over residues 501-527; sequence GSTRVDGSTRADETTRADETTRLDVTT. 2 disordered regions span residues 501 to 558 and 911 to 930; these read GSTR…RDSM and PFLPPPRRSGGPLTRPHQEP. Residues 532 to 546 show a composition bias toward low complexity; sequence APDAARRPAGPVAPV. A compositionally biased stretch (basic and acidic residues) spans 547–556; sequence RPDDWPRSRD.

This sequence in the N-terminal section; belongs to the protein kinase superfamily.

It is found in the cell membrane. Required for aerial hyphae formation. Probably involved in processing the precursor of SapB to its mature form. This chain is Probable SapB synthase, found in Streptomyces coelicolor (strain ATCC BAA-471 / A3(2) / M145).